Here is a 764-residue protein sequence, read N- to C-terminus: Serine/threonine-protein kinase MPS1 (764 aa).

Disordered stretches follow at residues 66–95, 197–216, and 258–316; these read EEMDRSSSRSHPPPSMGNLTSGHTSTSSHS, ELPLEDSHQTNFKETKRNTD, and QAAL…KSSI. Low complexity predominate over residues 85-95; sequence TSGHTSTSSHS. Residues 201-216 are compositionally biased toward basic and acidic residues; it reads EDSHQTNFKETKRNTD. Composition is skewed to low complexity over residues 272–292 and 306–315; these read KSRSSSSSLSSNNLLANKDNS and STGSSSSKSS. A Protein kinase domain is found at 440–720; it reads YEKIELLGRG…LSSTFLQPFM (281 aa). Residues 446–454 and Lys468 each bind ATP; that span reads LGRGGSSRV. The Proton acceptor role is filled by Asp563.

This sequence belongs to the protein kinase superfamily. Ser/Thr protein kinase family. Post-translationally, autophosphorylated.

It carries out the reaction L-seryl-[protein] + ATP = O-phospho-L-seryl-[protein] + ADP + H(+). The catalysed reaction is L-threonyl-[protein] + ATP = O-phospho-L-threonyl-[protein] + ADP + H(+). It catalyses the reaction L-tyrosyl-[protein] + ATP = O-phospho-L-tyrosyl-[protein] + ADP + H(+). Involved in mitotic spindle assembly checkpoint signaling, a process that delays anaphase until chromosomes are bioriented on the spindle, and in the repair of incorrect mitotic kinetochore-spindle microtubule attachments. Phosphorylates SPC105 on MELT motifs; phosphorylation is required for recruitment of the BUB1-BUB3 complex to kinetochores. Phosphorylates CNN1, which contributes to the enrichment of CNN1 on anaphase kinetochores. Implicated in spindle pole body (SPD) duplication. Phosphorylates the SPC29 and SPC110 spindle pole body components. The polypeptide is Serine/threonine-protein kinase MPS1 (MPS1) (Saccharomyces cerevisiae (strain ATCC 204508 / S288c) (Baker's yeast)).